Here is a 181-residue protein sequence, read N- to C-terminus: ATP synthase subunit b, chloroplastic (181 aa).

The chain crosses the membrane as a helical span at residues 31 to 50 (NVLNIAILLSGVVYLGRNFL).

It belongs to the ATPase B chain family. As to quaternary structure, F-type ATPases have 2 components, F(1) - the catalytic core - and F(0) - the membrane proton channel. F(1) has five subunits: alpha(3), beta(3), gamma(1), delta(1), epsilon(1). F(0) has four main subunits: a(1), b(1), b'(1) and c(10-14). The alpha and beta chains form an alternating ring which encloses part of the gamma chain. F(1) is attached to F(0) by a central stalk formed by the gamma and epsilon chains, while a peripheral stalk is formed by the delta, b and b' chains.

Its subcellular location is the plastid. The protein resides in the chloroplast thylakoid membrane. F(1)F(0) ATP synthase produces ATP from ADP in the presence of a proton or sodium gradient. F-type ATPases consist of two structural domains, F(1) containing the extramembraneous catalytic core and F(0) containing the membrane proton channel, linked together by a central stalk and a peripheral stalk. During catalysis, ATP synthesis in the catalytic domain of F(1) is coupled via a rotary mechanism of the central stalk subunits to proton translocation. Functionally, component of the F(0) channel, it forms part of the peripheral stalk, linking F(1) to F(0). This Rhodomonas salina (Cryptomonas salina) protein is ATP synthase subunit b, chloroplastic.